The chain runs to 579 residues: Pentatricopeptide repeat-containing protein At2g15690, mitochondrial (579 aa).

The N-terminal 49 residues, 1–49 (MSSLMAIRCARTQNIVTIGSLLQLRSSFPRLSSQFHFSGTLNSIPIKHL), are a transit peptide targeting the mitochondrion. Composition is skewed to polar residues over residues 56–71 (NDYHQNPQSGSPSQHQ) and 78–103 (SFDSQNQTNTNQRVPQSPNQWSTQHG). A disordered region spans residues 56–208 (NDYHQNPQSG…QMNEVAPPPS (153 aa)). Composition is skewed to low complexity over residues 117 to 136 (GGQRPPYGGQNPQQGGQMSQ) and 148 to 199 (RPQY…SPNQ). PPR repeat units follow at residues 235–269 (DRECFVLLFESCANLKSLEHSKKVHDHFLQSKFRG), 270–300 (DPKLNNMVISMFGECSSITDAKRVFDHMVDK), 301–335 (DMDSWHLMMCAYSDNGMGDDALHLFEEMTKHGLKP), 336–371 (NEETFLTVFLACATVGGIEEAFLHFDSMKNEHGISP), and 372–402 (KTEHYLGVLGVLGKCGHLVEAEQYIRDLPFE). The tract at residues 485–579 (GVVYVPDTRF…DGKCSCGDYW (95 aa)) is type DYW motif.

It belongs to the PPR family. PCMP-H subfamily.

It localises to the mitochondrion. The chain is Pentatricopeptide repeat-containing protein At2g15690, mitochondrial (PCMP-H66) from Arabidopsis thaliana (Mouse-ear cress).